A 363-amino-acid chain; its full sequence is 3-dehydroquinate synthase (363 aa).

Residues Thr134–Thr135, Lys147, and Lys156 contribute to the NAD(+) site. Glu189, His254, and His271 together coordinate Zn(2+).

It belongs to the sugar phosphate cyclases superfamily. Dehydroquinate synthase family. Co(2+) is required as a cofactor. It depends on Zn(2+) as a cofactor. Requires NAD(+) as cofactor.

Its subcellular location is the cytoplasm. It carries out the reaction 7-phospho-2-dehydro-3-deoxy-D-arabino-heptonate = 3-dehydroquinate + phosphate. Its pathway is metabolic intermediate biosynthesis; chorismate biosynthesis; chorismate from D-erythrose 4-phosphate and phosphoenolpyruvate: step 2/7. Catalyzes the conversion of 3-deoxy-D-arabino-heptulosonate 7-phosphate (DAHP) to dehydroquinate (DHQ). This chain is 3-dehydroquinate synthase, found in Prochlorococcus marinus (strain AS9601).